The primary structure comprises 485 residues: Pyruvate kinase (485 aa).

Arginine 33 contributes to the substrate binding site. The K(+) site is built by asparagine 35, serine 37, aspartate 67, and threonine 68. ATP is bound at residue asparagine 35 to histidine 38. Residues arginine 74 and lysine 155 each coordinate ATP. Position 221 (glutamate 221) interacts with Mg(2+). Glycine 244, aspartate 245, and threonine 277 together coordinate substrate. Residue aspartate 245 participates in Mg(2+) binding.

Belongs to the pyruvate kinase family. As to quaternary structure, homotetramer. Mg(2+) serves as cofactor. Requires K(+) as cofactor.

The catalysed reaction is pyruvate + ATP = phosphoenolpyruvate + ADP + H(+). It functions in the pathway carbohydrate degradation; glycolysis; pyruvate from D-glyceraldehyde 3-phosphate: step 5/5. The protein is Pyruvate kinase (pyk) of Chlamydia trachomatis serovar D (strain ATCC VR-885 / DSM 19411 / UW-3/Cx).